A 602-amino-acid polypeptide reads, in one-letter code: DNA ligase (602 aa).

ATP is bound at residue glutamate 262. Lysine 264 acts as the N6-AMP-lysine intermediate in catalysis. Arginine 269, arginine 284, glutamate 314, phenylalanine 354, arginine 431, and lysine 437 together coordinate ATP.

The protein belongs to the ATP-dependent DNA ligase family. Monomer. It depends on Mg(2+) as a cofactor. Mn(2+) is required as a cofactor.

It catalyses the reaction ATP + (deoxyribonucleotide)n-3'-hydroxyl + 5'-phospho-(deoxyribonucleotide)m = (deoxyribonucleotide)n+m + AMP + diphosphate.. It carries out the reaction ADP + (deoxyribonucleotide)n-3'-hydroxyl + 5'-phospho-(deoxyribonucleotide)m = (deoxyribonucleotide)n+m + AMP + phosphate.. The enzyme catalyses GTP + (deoxyribonucleotide)n-3'-hydroxyl + 5'-phospho-(deoxyribonucleotide)m = (deoxyribonucleotide)n+m + GMP + diphosphate.. Inhibited in the presence of 100 mM KCl, NaCl or NH(4)Cl. Its function is as follows. DNA ligase that seals nicks in double-stranded DNA during DNA replication, DNA recombination and DNA repair. Can also use ADP, but not NAD(+). In Aeropyrum pernix (strain ATCC 700893 / DSM 11879 / JCM 9820 / NBRC 100138 / K1), this protein is DNA ligase.